The sequence spans 305 residues: MLKQRTIKSIVKTVGIGLHSGRKIELTLRPAAPGTGIVFSRIDLPTPVDIPASAMSIGDTRLASVLQKDGARVSTVEHLMSACAGLGIDNLYVDVTAEEIPIMDGSAATFVFLIQSAGIEEQNAPKRFIKVTKPVEIRDGDKFARLDPYFGFKLKFSIDFRHPAVDKTGQELEVDFANTSYVREIARARTFGFAHEAEMLRELGLARGGSMDNAIVLDEYRILNNDGLRYDDEFVKHKMLDAIGDLYVVGHPLLASYTAYKSGHGLNNALLRELLAHEDAYEIVTFDDPQAAPKGFAFDAQTAFA.

Residues histidine 78, histidine 237, and aspartate 241 each coordinate Zn(2+). Histidine 264 serves as the catalytic Proton donor.

The protein belongs to the LpxC family. Requires Zn(2+) as cofactor.

It carries out the reaction a UDP-3-O-[(3R)-3-hydroxyacyl]-N-acetyl-alpha-D-glucosamine + H2O = a UDP-3-O-[(3R)-3-hydroxyacyl]-alpha-D-glucosamine + acetate. Its pathway is glycolipid biosynthesis; lipid IV(A) biosynthesis; lipid IV(A) from (3R)-3-hydroxytetradecanoyl-[acyl-carrier-protein] and UDP-N-acetyl-alpha-D-glucosamine: step 2/6. Its function is as follows. Catalyzes the hydrolysis of UDP-3-O-myristoyl-N-acetylglucosamine to form UDP-3-O-myristoylglucosamine and acetate, the committed step in lipid A biosynthesis. This Burkholderia ambifaria (strain MC40-6) protein is UDP-3-O-acyl-N-acetylglucosamine deacetylase.